Reading from the N-terminus, the 254-residue chain is MRAFYGTELPNPLMLGTAQYPSPAILEQAFRASGAGVATVSLRRESGAGQTFWSMIRDLGVLILPNTAGCHTVKEAVTTAHMAREVFGTPWIKLELIGHTDSLQPDVFGLIEAARILTEDGFQVFPYTTDDLIVGERLLAAGCEVLMPWGAPIGSGRGLNNEYALRAMRAEFPDTPLVVDAGIGLPSHAARALELGYDAVLLNTAVARAGDPVEMARAMALAIQAGQLAHRADPIEARDMASASTPVIGKAFLS.

The active-site Schiff-base intermediate with DXP is Lys93. Residues Gly154, 181–182 (AG), and 203–204 (NT) each bind 1-deoxy-D-xylulose 5-phosphate.

It belongs to the ThiG family. Homotetramer. Forms heterodimers with either ThiH or ThiS.

It is found in the cytoplasm. It carries out the reaction [ThiS sulfur-carrier protein]-C-terminal-Gly-aminoethanethioate + 2-iminoacetate + 1-deoxy-D-xylulose 5-phosphate = [ThiS sulfur-carrier protein]-C-terminal Gly-Gly + 2-[(2R,5Z)-2-carboxy-4-methylthiazol-5(2H)-ylidene]ethyl phosphate + 2 H2O + H(+). Its pathway is cofactor biosynthesis; thiamine diphosphate biosynthesis. Functionally, catalyzes the rearrangement of 1-deoxy-D-xylulose 5-phosphate (DXP) to produce the thiazole phosphate moiety of thiamine. Sulfur is provided by the thiocarboxylate moiety of the carrier protein ThiS. In vitro, sulfur can be provided by H(2)S. The protein is Thiazole synthase of Ruegeria pomeroyi (strain ATCC 700808 / DSM 15171 / DSS-3) (Silicibacter pomeroyi).